The chain runs to 397 residues: Chorismate synthase (397 aa).

The NADP(+) site is built by Arg-40 and Arg-46. FMN-binding positions include 129 to 131, 257 to 258, Gly-302, 317 to 321, and Arg-343; these read RSS, QA, and KPISS.

This sequence belongs to the chorismate synthase family. As to quaternary structure, homotetramer. Requires FMNH2 as cofactor.

The enzyme catalyses 5-O-(1-carboxyvinyl)-3-phosphoshikimate = chorismate + phosphate. It functions in the pathway metabolic intermediate biosynthesis; chorismate biosynthesis; chorismate from D-erythrose 4-phosphate and phosphoenolpyruvate: step 7/7. Its function is as follows. Catalyzes the anti-1,4-elimination of the C-3 phosphate and the C-6 proR hydrogen from 5-enolpyruvylshikimate-3-phosphate (EPSP) to yield chorismate, which is the branch point compound that serves as the starting substrate for the three terminal pathways of aromatic amino acid biosynthesis. This reaction introduces a second double bond into the aromatic ring system. The protein is Chorismate synthase of Chlorobaculum tepidum (strain ATCC 49652 / DSM 12025 / NBRC 103806 / TLS) (Chlorobium tepidum).